Here is a 570-residue protein sequence, read N- to C-terminus: E3 ubiquitin-protein ligase ZFP91 (570 aa).

Positions 1–12 (MPGETEEPRPPE) are enriched in basic and acidic residues. The segment at 1–306 (MPGETEEPRP…PRLPKRRKKP (306 aa)) is disordered. Low complexity-rich tracts occupy residues 31–43 (QRPPEAVAAAPAG) and 59–68 (AAAAAAAAAV). The segment covering 69-82 (SRRRKAEYPRRRRS) has biased composition (basic residues). Ser83 and Ser103 each carry phosphoserine. The span at 94–104 (QQPQAAKSPSP) shows a compositional bias: polar residues. The segment covering 119 to 128 (VTTDKDPKEE) has biased composition (basic and acidic residues). Positions 207–223 (SEEEEEEEEEMLISEEE) are enriched in acidic residues. Basic and acidic residues-rich tracts occupy residues 224 to 245 (IPFKDDPRDETYKPHLERETPK) and 252 to 269 (KVKEEKEKKEIKVEVEVE). The segment covering 270 to 282 (VKEEENEIREDEE) has biased composition (acidic residues). 5 consecutive C2H2-type zinc fingers follow at residues 311 to 336 (VRCEMEGCGTVLAHPRYLQHHIKYQH), 342 to 366 (YVCPHPSCGRLFRLQKQLLRHAKHH), 372 to 394 (YICEYCARAFKSSHNLAVHRMIH), 400 to 422 (LQCEICGFTCRQKASLNWHMKKH), and 430 to 453 (FSCNICGKKFEKKDSVVAHKAKSH). The interval 338-368 (LKKKYVCPHPSCGRLFRLQKQLLRHAKHHTD) is interaction with MAP3K14/NIK.

The protein belongs to the krueppel C2H2-type zinc-finger protein family. Interacts with MAP3K14/NIK. Expressed ubiquitously, particularly at high level in testis. Isoform 2 is testis specific.

The protein resides in the nucleus. The enzyme catalyses S-ubiquitinyl-[E2 ubiquitin-conjugating enzyme]-L-cysteine + [acceptor protein]-L-lysine = [E2 ubiquitin-conjugating enzyme]-L-cysteine + N(6)-ubiquitinyl-[acceptor protein]-L-lysine.. Its pathway is protein modification; protein ubiquitination. In terms of biological role, atypical E3 ubiquitin-protein ligase that mediates 'Lys-63'-linked ubiquitination of MAP3K14/NIK, leading to stabilize and activate MAP3K14/NIK. It thereby acts as an activator of the non-canonical NF-kappa-B2/NFKB2 pathway. May also play an important role in cell proliferation and/or anti-apoptosis. This is E3 ubiquitin-protein ligase ZFP91 (ZFP91) from Homo sapiens (Human).